The chain runs to 68 residues: Large ribosomal subunit protein eL24 (68 aa).

The Zn(2+) site is built by Cys7, Cys10, Cys33, and Cys37. A C4-type zinc finger spans residues 7 to 37 (CSYCGREFEPGTGKMFVRNDGRVLFFCSSKC).

Belongs to the eukaryotic ribosomal protein eL24 family. In terms of assembly, part of the 50S ribosomal subunit. Forms a cluster with proteins L3 and L14. Zn(2+) is required as a cofactor.

In terms of biological role, binds to the 23S rRNA. This chain is Large ribosomal subunit protein eL24, found in Thermococcus onnurineus (strain NA1).